Consider the following 369-residue polypeptide: Phenylalanine--tRNA ligase alpha subunit (369 aa).

Glu269 lines the Mg(2+) pocket.

Belongs to the class-II aminoacyl-tRNA synthetase family. Phe-tRNA synthetase alpha subunit type 1 subfamily. As to quaternary structure, tetramer of two alpha and two beta subunits. Mg(2+) serves as cofactor.

The protein resides in the cytoplasm. It carries out the reaction tRNA(Phe) + L-phenylalanine + ATP = L-phenylalanyl-tRNA(Phe) + AMP + diphosphate + H(+). In Brucella abortus (strain 2308), this protein is Phenylalanine--tRNA ligase alpha subunit.